Reading from the N-terminus, the 585-residue chain is Ras-specific guanine nucleotide-releasing factor RalGPS1 (585 aa).

The 240-residue stretch at 50–289 (TPEEFASQIT…YKLSLRIEPG (240 aa)) folds into the Ras-GEF domain. Disordered stretches follow at residues 289–342 (GSSS…KSHS) and 378–410 (RSPRRGLTHTSSTAITNGLSLGSSESSEFSEEM). The segment covering 303–312 (AGPSAGSSSA) has biased composition (low complexity). The PXXP signature appears at 330–333 (PTPP). Residues 385-396 (THTSSTAITNGL) are compositionally biased toward polar residues. One can recognise a PH domain in the interval 459-571 (VPTMEGPLRR…WHKHLDDACK (113 aa)). Residues 461 to 585 (TMEGPLRRKT…QVPANLMSFE (125 aa)) are required for stimulation of nucleotide exchange by RALA.

Interacts with the SH3 domains of GRB2, NCK1, PLCG1 and SRC.

It is found in the cytoplasm. The protein localises to the cell membrane. Its function is as follows. Guanine nucleotide exchange factor for the small GTPase RALA. May be involved in cytoskeleton organization. The polypeptide is Ras-specific guanine nucleotide-releasing factor RalGPS1 (Ralgps1) (Mus musculus (Mouse)).